A 71-amino-acid chain; its full sequence is UPF0437 protein asl1434 (71 aa).

This sequence belongs to the UPF0437 family.

The protein is UPF0437 protein asl1434 of Nostoc sp. (strain PCC 7120 / SAG 25.82 / UTEX 2576).